Reading from the N-terminus, the 198-residue chain is Glycerol-3-phosphate acyltransferase (198 aa).

The next 5 helical transmembrane spans lie at 2 to 22, 53 to 75, 79 to 98, 113 to 133, and 147 to 167; these read FITYLLLIVAYLLGSIPFALV, AGFIVTIADILKGTLATGLPLIF, IHPLLFGLAAVLGHVYPIFA, LLCYAPIIFAILAVVFFTLLF, and IAAVIASIVNGDKIFIVAMCL.

It belongs to the PlsY family. In terms of assembly, probably interacts with PlsX.

The protein resides in the cell membrane. The catalysed reaction is an acyl phosphate + sn-glycerol 3-phosphate = a 1-acyl-sn-glycero-3-phosphate + phosphate. The protein operates within lipid metabolism; phospholipid metabolism. Functionally, catalyzes the transfer of an acyl group from acyl-phosphate (acyl-PO(4)) to glycerol-3-phosphate (G3P) to form lysophosphatidic acid (LPA). This enzyme utilizes acyl-phosphate as fatty acyl donor, but not acyl-CoA or acyl-ACP. The protein is Glycerol-3-phosphate acyltransferase of Bacillus cytotoxicus (strain DSM 22905 / CIP 110041 / 391-98 / NVH 391-98).